Here is a 136-residue protein sequence, read N- to C-terminus: Large-conductance mechanosensitive channel (136 aa).

2 helical membrane-spanning segments follow: residues 10–30 (FAMR…AAFG) and 76–96 (GVFI…FMAI).

Belongs to the MscL family. In terms of assembly, homopentamer.

It localises to the cell inner membrane. Its function is as follows. Channel that opens in response to stretch forces in the membrane lipid bilayer. May participate in the regulation of osmotic pressure changes within the cell. The sequence is that of Large-conductance mechanosensitive channel from Shigella boydii serotype 18 (strain CDC 3083-94 / BS512).